A 213-amino-acid chain; its full sequence is Pyridoxine/pyridoxamine 5'-phosphate oxidase (213 aa).

Substrate-binding positions include 8 to 11 (RREY) and K67. FMN-binding positions include 62–67 (RIVLLK), 77–78 (FT), R83, K84, and Q106. Y124, R128, and S132 together coordinate substrate. FMN is bound by residues 141 to 142 (QS) and W186. 192 to 194 (RLH) contributes to the substrate binding site. R196 serves as a coordination point for FMN.

The protein belongs to the pyridoxamine 5'-phosphate oxidase family. As to quaternary structure, homodimer. Requires FMN as cofactor.

The enzyme catalyses pyridoxamine 5'-phosphate + O2 + H2O = pyridoxal 5'-phosphate + H2O2 + NH4(+). It catalyses the reaction pyridoxine 5'-phosphate + O2 = pyridoxal 5'-phosphate + H2O2. It participates in cofactor metabolism; pyridoxal 5'-phosphate salvage; pyridoxal 5'-phosphate from pyridoxamine 5'-phosphate: step 1/1. The protein operates within cofactor metabolism; pyridoxal 5'-phosphate salvage; pyridoxal 5'-phosphate from pyridoxine 5'-phosphate: step 1/1. In terms of biological role, catalyzes the oxidation of either pyridoxine 5'-phosphate (PNP) or pyridoxamine 5'-phosphate (PMP) into pyridoxal 5'-phosphate (PLP). This chain is Pyridoxine/pyridoxamine 5'-phosphate oxidase, found in Shewanella woodyi (strain ATCC 51908 / MS32).